Here is a 262-residue protein sequence, read N- to C-terminus: Phosphonates import ATP-binding protein PhnC (262 aa).

One can recognise an ABC transporter domain in the interval 5–253 (IRVEKLAKTF…RFDHLYRSIN (249 aa)). Position 37-44 (37-44 (GPSGSGKS)) interacts with ATP.

The protein belongs to the ABC transporter superfamily. Phosphonates importer (TC 3.A.1.9.1) family. In terms of assembly, the complex is composed of two ATP-binding proteins (PhnC), two transmembrane proteins (PhnE) and a solute-binding protein (PhnD).

It is found in the cell inner membrane. The catalysed reaction is phosphonate(out) + ATP + H2O = phosphonate(in) + ADP + phosphate + H(+). Functionally, part of the ABC transporter complex PhnCDE involved in phosphonates import. Responsible for energy coupling to the transport system. The protein is Phosphonates import ATP-binding protein PhnC of Escherichia coli O6:H1 (strain CFT073 / ATCC 700928 / UPEC).